The chain runs to 1413 residues: DNA-directed RNA polymerase subunit beta' (1413 aa).

Zn(2+) contacts are provided by Cys72, Cys74, Cys87, and Cys90. Mg(2+) is bound by residues Asp463, Asp465, and Asp467. Residues Cys811, Cys885, Cys892, and Cys895 each contribute to the Zn(2+) site.

The protein belongs to the RNA polymerase beta' chain family. As to quaternary structure, the RNAP catalytic core consists of 2 alpha, 1 beta, 1 beta' and 1 omega subunit. When a sigma factor is associated with the core the holoenzyme is formed, which can initiate transcription. It depends on Mg(2+) as a cofactor. Requires Zn(2+) as cofactor.

The enzyme catalyses RNA(n) + a ribonucleoside 5'-triphosphate = RNA(n+1) + diphosphate. DNA-dependent RNA polymerase catalyzes the transcription of DNA into RNA using the four ribonucleoside triphosphates as substrates. The sequence is that of DNA-directed RNA polymerase subunit beta' from Ruegeria pomeroyi (strain ATCC 700808 / DSM 15171 / DSS-3) (Silicibacter pomeroyi).